A 139-amino-acid chain; its full sequence is Small ribosomal subunit protein uS12m (139 aa).

The transit peptide at 1 to 29 (MSWPGLLYGLTTSLSRGLALAPQLWAARS) directs the protein to the mitochondrion.

This sequence belongs to the universal ribosomal protein uS12 family. As to quaternary structure, component of the mitochondrial ribosome small subunit (28S) which comprises a 12S rRNA and about 30 distinct proteins.

It localises to the mitochondrion. This is Small ribosomal subunit protein uS12m (Mrps12) from Mus musculus (Mouse).